A 1087-amino-acid polypeptide reads, in one-letter code: Band 4.1-like protein 3 (1087 aa).

Residue Met1 is modified to N-acetylmethionine. The interval 1 to 43 is disordered; the sequence is MTTESGSDSESKPDQEAEPQEAAGAQGRAGAPVPEPPKEEQQQ. Thr2 carries the post-translational modification N-acetylthreonine; in Band 4.1-like protein 3, N-terminally processed. Over residues 20 to 32 the composition is skewed to low complexity; the sequence is QEAAGAQGRAGAP. The residue at position 88 (Ser88) is a Phosphoserine. The region spanning 110–391 is the FERM domain; the sequence is MQCKVILLDG…EHHTFFRLLL (282 aa). The interval 394–513 is hydrophilic; it reads APPKKFLTLG…PGLGTDSCPL (120 aa). Ser420, Ser443, and Ser460 each carry phosphoserine. Over residues 459 to 469 the composition is skewed to polar residues; it reads ISQTNLITTVT. Disordered regions lie at residues 459–529, 541–563, 675–715, and 937–965; these read ISQT…TELR, GYEP…GPGR, SASL…EDAE, and SETL…SPGG. A phosphothreonine mark is found at Thr469 and Thr492. A spectrin--actin-binding region spans residues 514–860; the sequence is SPPSTHCAPT…VVQETVLVEE (347 aa). Polar residues predominate over residues 516–526; that stretch reads PSTHCAPTSPT. Residues 681–691 show a composition bias toward acidic residues; the sequence is DPSDSSEEETD. The segment covering 698–707 has biased composition (low complexity); that stretch reads AADGETTATE. Thr706 is subject to Phosphothreonine. 3 positions are modified to phosphoserine: Ser708, Ser960, and Ser962. Residues 861-1083 form a C-terminal (CTD) region; the sequence is RRVVHASGDA…VHKETEITPE (223 aa). Positions 947 to 960 are enriched in polar residues; the sequence is ESSTVKTETISFGS. Thr1081 bears the Phosphothreonine mark.

In terms of assembly, interacts (via FERM domain) with CADM1. Interacts (via FERM domain) with PRMT3; the interaction is direct and inhibits the protein-arginine N-methyltransferase activity of PRMT3. Interacts with PRMT5. Interacts with PRMT6. Expressed at high levels in brain, with lower levels in kidney, intestine, and testis. Detected in lung.

The protein localises to the cytoplasm. Its subcellular location is the cytoskeleton. It localises to the cell junction. The protein resides in the cell membrane. Tumor suppressor that inhibits cell proliferation and promotes apoptosis. Modulates the activity of protein arginine N-methyltransferases, including PRMT3 and PRMT5. The sequence is that of Band 4.1-like protein 3 from Homo sapiens (Human).